A 308-amino-acid chain; its full sequence is D-alanine--D-alanine ligase (308 aa).

The region spanning 105-302 (KAIFRSLGLA…FPDLCERILD (198 aa)) is the ATP-grasp domain. 133–188 (DLPFGLPCVVKPAGEGSSVGVHLVNEAAELGPACRDAASHAGDVIVERYVKGTEVD) is an ATP binding site. Mg(2+) contacts are provided by Asp256, Glu269, and Asn271.

This sequence belongs to the D-alanine--D-alanine ligase family. It depends on Mg(2+) as a cofactor. Mn(2+) is required as a cofactor.

It is found in the cytoplasm. It catalyses the reaction 2 D-alanine + ATP = D-alanyl-D-alanine + ADP + phosphate + H(+). Its pathway is cell wall biogenesis; peptidoglycan biosynthesis. Its function is as follows. Cell wall formation. The chain is D-alanine--D-alanine ligase from Anaeromyxobacter sp. (strain K).